A 423-amino-acid chain; its full sequence is UDP-N-acetylgalactosamine-undecaprenyl-phosphate N-acetylgalactosaminephosphotransferase (423 aa).

Residues 1–13 lie on the Extracellular side of the membrane; the sequence is MSYQRRHSRWYER. Residues 14–34 form a helical membrane-spanning segment; sequence VLFSPPSLFFLGAMLAVCLPA. Residues 35–47 are Cytoplasmic-facing; that stretch reads LERWGWGFWEYFD. The helical transmembrane segment at 48 to 68 threads the bilayer; that stretch reads AVRVNTLGGAFVAFLLTGIVL. Residues 69 to 79 are Extracellular-facing; the sequence is YRFLRYPGASP. A helical membrane pass occupies residues 80-100; that stretch reads VAYMIPTVTTLYGSLVGALFF. The Cytoplasmic portion of the chain corresponds to 101–107; that stretch reads LRLPYSR. Residues 108 to 128 form a helical membrane-spanning segment; the sequence is QVLFESYVVALLCCWVVYFIG. Topologically, residues 129-239 are extracellular; that stretch reads RRYRTPKYAL…IYAFIKRGMD (111 aa). A helical transmembrane segment spans residues 240 to 260; it reads ILAAVIAIPLFSPLMLATAVL. Over 261 to 423 the chain is Cytoplasmic; it reads IKLESPGPVM…RTILTGFGAR (163 aa).

This sequence belongs to the bacterial sugar transferase family.

Its subcellular location is the membrane. It carries out the reaction di-trans,octa-cis-undecaprenyl phosphate + UDP-N-acetyl-alpha-D-galactosamine = N-acetyl-alpha-D-galactosaminyl-di-trans,octa-cis-undecaprenyl diphosphate + UMP. Its pathway is bacterial outer membrane biogenesis; LPS O-antigen biosynthesis. In terms of biological role, transfers N-acetyl-galactosamine (GalNAc) to undecaprenyl phosphate, a step in the assembly of the repeating-unit of the O-antigen. Shows no activity with UDP-N-acetyl-alpha-D-glucosamine. This chain is UDP-N-acetylgalactosamine-undecaprenyl-phosphate N-acetylgalactosaminephosphotransferase (wecA), found in Aeromonas hydrophila.